The following is a 470-amino-acid chain: 3-isopropylmalate dehydratase large subunit (470 aa).

[4Fe-4S] cluster-binding residues include Cys351, Cys411, and Cys414.

This sequence belongs to the aconitase/IPM isomerase family. LeuC type 1 subfamily. Heterodimer of LeuC and LeuD. The cofactor is [4Fe-4S] cluster.

The enzyme catalyses (2R,3S)-3-isopropylmalate = (2S)-2-isopropylmalate. The protein operates within amino-acid biosynthesis; L-leucine biosynthesis; L-leucine from 3-methyl-2-oxobutanoate: step 2/4. Catalyzes the isomerization between 2-isopropylmalate and 3-isopropylmalate, via the formation of 2-isopropylmaleate. This is 3-isopropylmalate dehydratase large subunit from Rhodopseudomonas palustris (strain BisB5).